Here is a 280-residue protein sequence, read N- to C-terminus: 4-diphosphocytidyl-2-C-methyl-D-erythritol kinase (280 aa).

Residue Lys11 is part of the active site. 95-105 (PVAAGLGGGSS) provides a ligand contact to ATP. Residue Asp137 is part of the active site.

This sequence belongs to the GHMP kinase family. IspE subfamily.

It carries out the reaction 4-CDP-2-C-methyl-D-erythritol + ATP = 4-CDP-2-C-methyl-D-erythritol 2-phosphate + ADP + H(+). It functions in the pathway isoprenoid biosynthesis; isopentenyl diphosphate biosynthesis via DXP pathway; isopentenyl diphosphate from 1-deoxy-D-xylulose 5-phosphate: step 3/6. Catalyzes the phosphorylation of the position 2 hydroxy group of 4-diphosphocytidyl-2C-methyl-D-erythritol. This chain is 4-diphosphocytidyl-2-C-methyl-D-erythritol kinase, found in Pelobacter propionicus (strain DSM 2379 / NBRC 103807 / OttBd1).